The chain runs to 554 residues: MFMATDVEIAQKAKLEKISVIAEKMGLTEEDYEQYGRYKAKLDLNLFEKNKDKKDGKLILMTSINPTPTGEGKTTMNVGLAMGLNKIGKNAISVLREPSLGPNFGMKGGAAGGGYAQVVPMDEINMHFTGDFHAITTANNLICAMMDNHIHQGNALNIDPKQILIKRCMDMNERELRDIIIGVGAKGNGVMRQDGFEITVASEIMAILCLAKDLKDLKERVGNILIAFDKEGKPVYARDVKADGAVALVMKEAIKPNLVQTLEHTPAIIHGGPFANIAHGCNSLIATKLGLKLGDYVVTEAGFGADLGAEKFFDIKCRNDLHPNMVCIVATIKALKHHGEAEDFKVENVEALEKGYANLKRHIENMKKYKVPVVVAINRFATDTDAEIKKLTELVEADGTRAIFCDVWAKGGEGAKELAEYVVENTKEENDFEFLYDLELPIKEKIEKIAKEIYRADGVEFSAKAKKKLKQIKELGLDNYPVCMAKTQYSFSDNKKLIGAPTGFTITVSDFKISRGAGFVVALLGSVMTMPGLPKVPSAENCDVLDDGTVVGLF.

Position 67-74 (67-74 (TPTGEGKT)) interacts with ATP.

Belongs to the formate--tetrahydrofolate ligase family.

The enzyme catalyses (6S)-5,6,7,8-tetrahydrofolate + formate + ATP = (6R)-10-formyltetrahydrofolate + ADP + phosphate. It functions in the pathway one-carbon metabolism; tetrahydrofolate interconversion. The protein is Formate--tetrahydrofolate ligase of Finegoldia magna (strain ATCC 29328 / DSM 20472 / WAL 2508) (Peptostreptococcus magnus).